Consider the following 274-residue polypeptide: NH(3)-dependent NAD(+) synthetase (274 aa).

46–53 (GISGGQDS) is an ATP binding site. Mg(2+) is bound at residue aspartate 52. Residue arginine 140 coordinates deamido-NAD(+). Residue threonine 160 participates in ATP binding. Mg(2+) is bound at residue glutamate 165. Positions 173 and 180 each coordinate deamido-NAD(+). ATP is bound by residues lysine 189 and threonine 211. 260–261 (HK) provides a ligand contact to deamido-NAD(+).

Belongs to the NAD synthetase family. Homodimer.

It carries out the reaction deamido-NAD(+) + NH4(+) + ATP = AMP + diphosphate + NAD(+) + H(+). The protein operates within cofactor biosynthesis; NAD(+) biosynthesis; NAD(+) from deamido-NAD(+) (ammonia route): step 1/1. Catalyzes the ATP-dependent amidation of deamido-NAD to form NAD. Uses ammonia as a nitrogen source. The polypeptide is NH(3)-dependent NAD(+) synthetase (Streptococcus pyogenes serotype M18 (strain MGAS8232)).